A 286-amino-acid chain; its full sequence is ATP synthase gamma chain (286 aa).

It belongs to the ATPase gamma chain family. In terms of assembly, F-type ATPases have 2 components, CF(1) - the catalytic core - and CF(0) - the membrane proton channel. CF(1) has five subunits: alpha(3), beta(3), gamma(1), delta(1), epsilon(1). CF(0) has three main subunits: a, b and c.

It is found in the cell membrane. Its function is as follows. Produces ATP from ADP in the presence of a proton gradient across the membrane. The gamma chain is believed to be important in regulating ATPase activity and the flow of protons through the CF(0) complex. The polypeptide is ATP synthase gamma chain (Oceanobacillus iheyensis (strain DSM 14371 / CIP 107618 / JCM 11309 / KCTC 3954 / HTE831)).